A 318-amino-acid polypeptide reads, in one-letter code: Epithelial-stromal interaction protein 1 (318 aa).

Positions 1 to 60 are disordered; sequence MNTRNRVVNSGLGASPASRPTRDPQDPSGRQGELSPVEDQREGLEAAPKGPSRESVVHAG. Coiled-coil stretches lie at residues 73–188 and 240–280; these read NINR…HQQY and LKAE…HQTE.

In terms of tissue distribution, highly expressed in placenta, small intestine, spleen, kidney, thymus, liver, salivary gland and testes. Weakly expressed in breast, skeletal muscle and colon. Highly expressed in breast cancer upon interaction between tumor cells and stromal cells in vitro. Expressed in blood mononuclear cells from patients with systemic lupus erythematosus (SLE).

Its function is as follows. Plays a role in M1 macrophage polarization and is required for the proper regulation of gene expression during M1 versus M2 macrophage differentiation. Might play a role in RELA/p65 and STAT1 phosphorylation and nuclear localization upon activation of macrophages. The polypeptide is Epithelial-stromal interaction protein 1 (EPSTI1) (Homo sapiens (Human)).